Consider the following 423-residue polypeptide: 3-isopropylmalate dehydratase large subunit 1 (423 aa).

[4Fe-4S] cluster contacts are provided by C302, C362, and C365.

This sequence belongs to the aconitase/IPM isomerase family. LeuC type 2 subfamily. As to quaternary structure, heterodimer of LeuC and LeuD. [4Fe-4S] cluster is required as a cofactor.

The catalysed reaction is (2R,3S)-3-isopropylmalate = (2S)-2-isopropylmalate. Its pathway is amino-acid biosynthesis; L-leucine biosynthesis; L-leucine from 3-methyl-2-oxobutanoate: step 2/4. In terms of biological role, catalyzes the isomerization between 2-isopropylmalate and 3-isopropylmalate, via the formation of 2-isopropylmaleate. This is 3-isopropylmalate dehydratase large subunit 1 from Pyrococcus abyssi (strain GE5 / Orsay).